A 355-amino-acid polypeptide reads, in one-letter code: Countin-like protein (355 aa).

The first 27 residues, 1-27 (MNKSLFSLILLIITIFNLASNINIVSA), serve as a signal peptide directing secretion. The tract at residues 63-83 (NNHEDNNNNNNNNNNNNNAYN) is disordered. Residues 69-83 (NNNNNNNNNNNNAYN) are compositionally biased toward low complexity. A Saposin B-type domain is found at 93–177 (GDIECVVCLD…ELITACSTPK (85 aa)). 3 disulfides stabilise this stretch: Cys97–Cys173, Cys100–Cys167, and Cys128–Cys140. Residues Asn132, Asn209, Asn242, Asn253, Asn254, Asn282, and Asn303 are each glycosylated (N-linked (GlcNAc...) asparagine). The tract at residues 290–355 (ISNPTPTPTP…SSHYKNKINK (66 aa)) is disordered. Low complexity predominate over residues 301-342 (PSNSTTPTPTPTNSTPTPTSTSTPTSTPTSTPTPTPTSSSST). Residues 345–355 (HSSHYKNKINK) show a composition bias toward basic residues.

This sequence belongs to the countin family.

It localises to the secreted. The sequence is that of Countin-like protein from Dictyostelium discoideum (Social amoeba).